We begin with the raw amino-acid sequence, 303 residues long: N-acetyl-D-glucosamine kinase (303 aa).

ATP contacts are provided by residues 4-11 (GFDIGGTK) and 133-140 (GVGGGLIF). Zn(2+) contacts are provided by H157, C177, C179, and C184.

The protein belongs to the ROK (NagC/XylR) family. NagK subfamily.

The enzyme catalyses N-acetyl-D-glucosamine + ATP = N-acetyl-D-glucosamine 6-phosphate + ADP + H(+). Its pathway is cell wall biogenesis; peptidoglycan recycling. In terms of biological role, catalyzes the phosphorylation of N-acetyl-D-glucosamine (GlcNAc) derived from cell-wall degradation, yielding GlcNAc-6-P. The polypeptide is N-acetyl-D-glucosamine kinase (Shigella sonnei (strain Ss046)).